Reading from the N-terminus, the 137-residue chain is ATP synthase epsilon chain (137 aa).

It belongs to the ATPase epsilon chain family. As to quaternary structure, F-type ATPases have 2 components, CF(1) - the catalytic core - and CF(0) - the membrane proton channel. CF(1) has five subunits: alpha(3), beta(3), gamma(1), delta(1), epsilon(1). CF(0) has three main subunits: a, b and c.

The protein localises to the cellular thylakoid membrane. Functionally, produces ATP from ADP in the presence of a proton gradient across the membrane. This chain is ATP synthase epsilon chain, found in Trichormus variabilis (strain ATCC 29413 / PCC 7937) (Anabaena variabilis).